Here is a 380-residue protein sequence, read N- to C-terminus: Chaperone protein DnaJ (380 aa).

One can recognise a J domain in the interval 6–71 (DYYAILEVSR…QKRAAYDQYG (66 aa)). A CR-type zinc finger spans residues 136–215 (GVKKDVRVIT…CHGEGTVEKE (80 aa)). Zn(2+)-binding residues include Cys149, Cys152, Cys167, Cys170, Cys189, Cys192, Cys203, and Cys206. CXXCXGXG motif repeat units follow at residues 149–156 (CEACHGTG), 167–174 (CPSCHGAG), 189–196 (CPTCHGAG), and 203–210 (CKVCHGEG).

The protein belongs to the DnaJ family. In terms of assembly, homodimer. It depends on Zn(2+) as a cofactor.

The protein localises to the cytoplasm. Its function is as follows. Participates actively in the response to hyperosmotic and heat shock by preventing the aggregation of stress-denatured proteins and by disaggregating proteins, also in an autonomous, DnaK-independent fashion. Unfolded proteins bind initially to DnaJ; upon interaction with the DnaJ-bound protein, DnaK hydrolyzes its bound ATP, resulting in the formation of a stable complex. GrpE releases ADP from DnaK; ATP binding to DnaK triggers the release of the substrate protein, thus completing the reaction cycle. Several rounds of ATP-dependent interactions between DnaJ, DnaK and GrpE are required for fully efficient folding. Also involved, together with DnaK and GrpE, in the DNA replication of plasmids through activation of initiation proteins. The sequence is that of Chaperone protein DnaJ from Acetobacter pasteurianus (strain NBRC 105184 / IFO 3283-01).